A 725-amino-acid chain; its full sequence is FYVE, RhoGEF and PH domain-containing protein 3 (725 aa).

The interval 1 to 151 (MESGRGSSTP…KADKDAGLAQ (151 aa)) is disordered. The span at 124–136 (EEADSDVGEEPDS) shows a compositional bias: acidic residues. Ser128 bears the Phosphoserine mark. In terms of domain architecture, DH spans 157-341 (KLLHIAQELL…STAANHSNAA (185 aa)). The PH 1 domain maps to 370 to 469 (ELIKEGQIQK…WIQIIQATIE (100 aa)). The segment at 487–532 (QDEDPSLSPDMPITSTSPVEPVVTTEGSSGAAGLEPRKLSSKTRRD) is disordered. Low complexity predominate over residues 500 to 512 (TSTSPVEPVVTTE). Over residues 521 to 532 (EPRKLSSKTRRD) the composition is skewed to basic and acidic residues. The FYVE-type zinc-finger motif lies at 532–588 (DKEKQSCKSCGETFNSITKRRHHCKLCGAVICGKCSEFKAENSRQSRVCRDCFLTQP). Zn(2+)-binding residues include Cys538, Cys541, Cys555, Cys558, Cys563, Cys566, Cys580, and Cys583. The region spanning 604–703 (PSLLCGPLRL…WLETLSTAAH (100 aa)) is the PH 2 domain. A disordered region spans residues 703 to 725 (HGDTAQDSPGALQLQVPMGAAAP).

Its subcellular location is the cytoplasm. It localises to the cytoskeleton. In terms of biological role, promotes the formation of filopodia. May activate CDC42, a member of the Ras-like family of Rho- and Rac proteins, by exchanging bound GDP for free GTP. Plays a role in regulating the actin cytoskeleton and cell shape. This chain is FYVE, RhoGEF and PH domain-containing protein 3 (FGD3), found in Homo sapiens (Human).